A 174-amino-acid chain; its full sequence is Crossover junction endodeoxyribonuclease RuvC (174 aa).

Catalysis depends on residues Asp-8, Glu-69, and Asp-141. Asp-8, Glu-69, and Asp-141 together coordinate Mg(2+).

This sequence belongs to the RuvC family. In terms of assembly, homodimer which binds Holliday junction (HJ) DNA. The HJ becomes 2-fold symmetrical on binding to RuvC with unstacked arms; it has a different conformation from HJ DNA in complex with RuvA. In the full resolvosome a probable DNA-RuvA(4)-RuvB(12)-RuvC(2) complex forms which resolves the HJ. The cofactor is Mg(2+).

It is found in the cytoplasm. It carries out the reaction Endonucleolytic cleavage at a junction such as a reciprocal single-stranded crossover between two homologous DNA duplexes (Holliday junction).. Its function is as follows. The RuvA-RuvB-RuvC complex processes Holliday junction (HJ) DNA during genetic recombination and DNA repair. Endonuclease that resolves HJ intermediates. Cleaves cruciform DNA by making single-stranded nicks across the HJ at symmetrical positions within the homologous arms, yielding a 5'-phosphate and a 3'-hydroxyl group; requires a central core of homology in the junction. The consensus cleavage sequence is 5'-(A/T)TT(C/G)-3'. Cleavage occurs on the 3'-side of the TT dinucleotide at the point of strand exchange. HJ branch migration catalyzed by RuvA-RuvB allows RuvC to scan DNA until it finds its consensus sequence, where it cleaves and resolves the cruciform DNA. The protein is Crossover junction endodeoxyribonuclease RuvC of Xanthomonas oryzae pv. oryzae (strain PXO99A).